A 150-amino-acid chain; its full sequence is Cytochrome c oxidase subunit 5A, mitochondrial (150 aa).

A mitochondrion-targeting transit peptide spans 1–41 (MLGAALRRCAVAATTWAGPRGLLHSSRTPGPAAAIQSVRCY). The SIFI-degron signature appears at 2–17 (LGAALRRCAVAATTWA). An N6-acetyllysine mark is found at K87 and K113. T141 carries the post-translational modification Phosphothreonine.

Belongs to the cytochrome c oxidase subunit 5A family. Component of the cytochrome c oxidase (complex IV, CIV), a multisubunit enzyme composed of 14 subunits. The complex is composed of a catalytic core of 3 subunits MT-CO1, MT-CO2 and MT-CO3, encoded in the mitochondrial DNA, and 11 supernumerary subunits COX4I, COX5A, COX5B, COX6A, COX6B, COX6C, COX7A, COX7B, COX7C, COX8 and NDUFA4, which are encoded in the nuclear genome. The complex exists as a monomer or a dimer and forms supercomplexes (SCs) in the inner mitochondrial membrane with NADH-ubiquinone oxidoreductase (complex I, CI) and ubiquinol-cytochrome c oxidoreductase (cytochrome b-c1 complex, complex III, CIII), resulting in different assemblies (supercomplex SCI(1)III(2)IV(1) and megacomplex MCI(2)III(2)IV(2)). Interacts with AFG1L. Interacts with RAB5IF. In response to mitochondrial stress, the precursor protein is ubiquitinated by the SIFI complex in the cytoplasm before mitochondrial import, leading to its degradation. Within the SIFI complex, UBR4 initiates ubiquitin chain that are further elongated or branched by KCMF1.

It is found in the mitochondrion inner membrane. It functions in the pathway energy metabolism; oxidative phosphorylation. In terms of biological role, component of the cytochrome c oxidase, the last enzyme in the mitochondrial electron transport chain which drives oxidative phosphorylation. The respiratory chain contains 3 multisubunit complexes succinate dehydrogenase (complex II, CII), ubiquinol-cytochrome c oxidoreductase (cytochrome b-c1 complex, complex III, CIII) and cytochrome c oxidase (complex IV, CIV), that cooperate to transfer electrons derived from NADH and succinate to molecular oxygen, creating an electrochemical gradient over the inner membrane that drives transmembrane transport and the ATP synthase. Cytochrome c oxidase is the component of the respiratory chain that catalyzes the reduction of oxygen to water. Electrons originating from reduced cytochrome c in the intermembrane space (IMS) are transferred via the dinuclear copper A center (CU(A)) of subunit 2 and heme A of subunit 1 to the active site in subunit 1, a binuclear center (BNC) formed by heme A3 and copper B (CU(B)). The BNC reduces molecular oxygen to 2 water molecules using 4 electrons from cytochrome c in the IMS and 4 protons from the mitochondrial matrix. The polypeptide is Cytochrome c oxidase subunit 5A, mitochondrial (COX5A) (Colobus guereza (Mantled guereza)).